Reading from the N-terminus, the 201-residue chain is Ubiquinone biosynthesis accessory factor UbiJ (201 aa).

Residues 15–112 (LNTFLYRSPA…QVVQNFVALA (98 aa)) form the SCP2 domain.

The protein belongs to the UbiJ family. As to quaternary structure, component of the Ubi complex metabolon, which regroups five ubiquinone biosynthesis proteins (UbiE, UbiF, UbiG, UbiH and UbiI) and two accessory factors (UbiK and the lipid-binding protein UbiJ). Interacts with UbiK and forms a complex composed of 2 UbiK subunits and 1 UbiJ subunit. The UbiK-UbiJ complex interacts with palmitoleic acid.

The protein resides in the cytoplasm. It functions in the pathway cofactor biosynthesis; ubiquinone biosynthesis. Functionally, required for ubiquinone (coenzyme Q) biosynthesis under aerobic conditions. Binds hydrophobic ubiquinone biosynthetic intermediates via its SCP2 domain and is essential for the stability of the Ubi complex. May constitute a docking platform where Ubi enzymes assemble and access their SCP2-bound polyprenyl substrates. This Escherichia coli (strain K12) protein is Ubiquinone biosynthesis accessory factor UbiJ.